A 267-amino-acid polypeptide reads, in one-letter code: MLLVLIDVDGFMGQLYNENGTQTILIPREVVIFYWEKNTASKILQLFFHGGIDPIFEKINQRSFSFQSRHIHHFTLDESPLPNSIALPSDTLQAFKAGKKMIFQHLVKITKDHEQILLLHKGGPEGEWVRSFNIPHATVQNLNDLCCPSVEKLVLKKKDYISSSIGCPKHIQGSNHCPVFECHVLFKWIQENTSIVQGVLERPSLPYEKAVLFIEHRINMVDNHPFKKDSIKQNQKKKNWIATQFVQHGIYVDNGILGRIYNKYSLF.

It belongs to the asfivirus I267L family.

This chain is Protein I267L, found in African swine fever virus (isolate Warthog/Namibia/Wart80/1980) (ASFV).